A 130-amino-acid chain; its full sequence is Biotin carboxyl carrier protein (130 aa).

The interval 20-64 (EISESSVPAATPITPTTENTRAASDQKQQSQTPSPAATASAANTM) is disordered. Positions 23–46 (ESSVPAATPITPTTENTRAASDQK) are enriched in polar residues. Residues 47-64 (QQSQTPSPAATASAANTM) are compositionally biased toward low complexity. The region spanning 55 to 130 (AATASAANTM…NAGDNLITIA (76 aa)) is the Biotinyl-binding domain. An N6-biotinyllysine modification is found at Lys96.

In Streptococcus mutans serotype c (strain ATCC 700610 / UA159), this protein is Biotin carboxyl carrier protein (bcc).